The chain runs to 154 residues: D-aminoacyl-tRNA deacylase (154 aa).

The Gly-cisPro motif, important for rejection of L-amino acids signature appears at 142-143 (GP).

The protein belongs to the DTD family. In terms of assembly, homodimer.

It localises to the cytoplasm. The catalysed reaction is glycyl-tRNA(Ala) + H2O = tRNA(Ala) + glycine + H(+). It catalyses the reaction a D-aminoacyl-tRNA + H2O = a tRNA + a D-alpha-amino acid + H(+). In terms of biological role, an aminoacyl-tRNA editing enzyme that deacylates mischarged D-aminoacyl-tRNAs. Also deacylates mischarged glycyl-tRNA(Ala), protecting cells against glycine mischarging by AlaRS. Acts via tRNA-based rather than protein-based catalysis; rejects L-amino acids rather than detecting D-amino acids in the active site. By recycling D-aminoacyl-tRNA to D-amino acids and free tRNA molecules, this enzyme counteracts the toxicity associated with the formation of D-aminoacyl-tRNA entities in vivo and helps enforce protein L-homochirality. In Acidovorax sp. (strain JS42), this protein is D-aminoacyl-tRNA deacylase.